The chain runs to 436 residues: Xylose isomerase (436 aa).

Catalysis depends on residues His-100 and Asp-103. Residues Glu-231, Glu-267, His-270, Asp-295, Asp-306, Asp-308, and Asp-338 each contribute to the Mg(2+) site.

This sequence belongs to the xylose isomerase family. Homotetramer. Mg(2+) is required as a cofactor.

Its subcellular location is the cytoplasm. The catalysed reaction is alpha-D-xylose = alpha-D-xylulofuranose. The chain is Xylose isomerase from Ruegeria sp. (strain TM1040) (Silicibacter sp.).